We begin with the raw amino-acid sequence, 466 residues long: Replicative helicase loading/DNA remodeling protein DnaB (466 aa).

Positions 3–113 (RQAFEFGLRP…ETQFVYQLIQ (111 aa)) are DDBH1. A DDBH2-1 region spans residues 200–292 (EMLRQMLGKH…TSSSAGKSSE (93 aa)). The interval 293–401 (VNPKPQSDEW…QPKNEGSSGN (109 aa)) is DDBH2-2.

It belongs to the DnaB/DnaD family. Homotetramer, higher-order oligomers are induced by ssDNA. The DNA replisome assembles sequentially on oriC in this order; DnaA, DnaD, DnaB, DnaI-DnaC helicase. Part of the replication restart primosome, PriA binds first, then DnaD and subsequently DnaB bind.

In terms of biological role, helps DnaI load the DnaC replicative helicase onto single-stranded (ss)DNA. During DNA replication from the origin of replication (oriC) in the DNA replisome, DnaB and DnaD are required after DnaA and before subsequent helicase DnaC loading. Component of the replication restart primosome, which reloads the replicative helicase on sites other than oriC. Essential for replication initiation of the chromosome and plasmids. Remodels DNA, laterally compacts supercoiled plasmid and linear DNA. Binds supercoiled, nicked and linear double-stranded (ds)DNA and phage phiX174 single-stranded (ss)DNA; phiX174 ssDNA is a better substrate than for B.subtilis. No binding to phage M13 ssDNA although it induces oligomers. This chain is Replicative helicase loading/DNA remodeling protein DnaB, found in Staphylococcus aureus (strain NCTC 8325 / PS 47).